Consider the following 386-residue polypeptide: Benzoyl-CoA reductase subunit C (386 aa).

Belongs to the FldB/FldC dehydratase alpha/beta subunit family. In terms of assembly, heterotetramer composed of A, B, C, and D subunits. Requires iron-sulfur cluster as cofactor. An oxidized flavin is required as a cofactor.

It carries out the reaction cyclohexa-1,5-diene-1-carbonyl-CoA + oxidized 2[4Fe-4S]-[ferredoxin] + 2 ADP + 2 phosphate = reduced 2[4Fe-4S]-[ferredoxin] + benzoyl-CoA + 2 ATP + 2 H2O. The enzyme catalyses 3-hydroxybenzoyl-CoA + AH2 + 2 ATP + 2 H2O = 3-hydroxycyclohexa-1,5-diene-1-carbonyl-CoA + A + 2 ADP + 2 phosphate + 2 H(+). Catalyzes the anaerobic reduction of benzoyl-CoA and 3-hydroxybenzoyl-CoA to form cyclohexa-1,5-diene-1-carbonyl-CoA and 3-hydroxycyclohexa-1,5-diene-1-carbonyl-CoA, respectively. The enzyme also reduces other benzoyl-CoA analogs with small substituents at the aromatic ring. The sequence is that of Benzoyl-CoA reductase subunit C (bcrC) from Thauera aromatica.